Consider the following 243-residue polypeptide: Ornithine decarboxylase antizyme 3 (243 aa).

A phosphoserine mark is found at S6, S9, and S12.

It belongs to the ODC antizyme family. As to quaternary structure, interacts with ODC1 and thereby sterically blocks ODC homodimerization. Interacts with AZIN2; this interaction disrupts the interaction between the antizyme and ODC1. Interacts with GGN. Testis specific. Expressed throughout the differentiation process from spermatids to spermatozoa in the inner part of the seminiferous tubules.

Its subcellular location is the nucleus. The protein resides in the cytoplasm. Ornithine decarboxylase (ODC) antizyme protein that negatively regulates ODC activity and intracellular polyamine biosynthesis and uptake in response to increased intracellular polyamine levels. Binds to ODC monomers, inhibiting the assembly of the functional ODC homodimers. Does not target the ODC monomers for degradation, which allows a protein synthesis-independent restoration of ODC activity. Stabilizes AZIN2 by interfering with its ubiquitination. Involved in the translocation of AZNI2 from ER-Golgi intermediate compartment (ERGIC) to the cytosol. Probably plays a key role in spermatogenesis by regulating the intracellular concentration of polyamines in haploid germ cells. This is Ornithine decarboxylase antizyme 3 (Oaz3) from Mus musculus (Mouse).